The primary structure comprises 416 residues: MKRERGALSRASRALRLAPFVYLLLIQTDPLEGVNITSPVRLIHGTVGKSALLSVQYSSTSSDRPVVKWQLKRDKPVTVVQSIGTEVIGTLRPDYRDRIRLFENGSLLLSDLQLADEGTYEVEISITDDTFTGEKTINLTVDVPISRPQVLVASTTVLELSEAFTLNCSHENGTKPSYTWLKDGKPLLNDSRMLLSPDQKVLTITRVLMEDDDLYSCMVENPISQGRSLPVKITVYRRSSLYIILSTGGIFLLVTLVTVCACWKPSKRKQKKLEKQNSLEYMDQNDDRLKPEADTLPRSGEQERKNPMALYILKDKDSPETEENPAPEPRSATEPGPPGYSVSPAVPGRSPGLPIRSARRYPRSPARSPATGRTHSSPPRAPSSPGRSRSASRTLRTAGVHIIREQDEAGPVEISA.

Positions Met1–Gly33 are cleaved as a signal peptide. Positions Val34–Asp142 constitute an Ig-like V-type domain. At Val34–Ser240 the chain is on the extracellular side. N-linked (GlcNAc...) asparagine glycans are attached at residues Asn35, Asn138, Asn167, and Asn189. Residues Pro148–Thr234 form the Ig-like C2-type domain. An intrachain disulfide couples Cys168 to Cys217. Residues Leu241–Ala261 traverse the membrane as a helical segment. The Cytoplasmic portion of the chain corresponds to Cys262–Ala416. Residues Leu273–Ala416 form a disordered region. Ser278 is modified (phosphoserine). The segment covering Asn285–Asn306 has biased composition (basic and acidic residues). Phosphoserine is present on residues Ser350 and Ser377. Over residues Ser383 to Ala398 the composition is skewed to low complexity.

Homodimer. Dimer formation occurs predominantly through cis interactions on the cell surface. Part of a complex containing MLC1, TRPV4, AQP4 and ATP1B1. Interacts with CLCN2. Post-translationally, N-glycosylated.

Its subcellular location is the cytoplasm. The protein localises to the cell membrane. Its function is as follows. Involved in regulating cell motility and cell-matrix interactions. May inhibit cell growth through suppression of cell proliferation. In glia, associates and targets CLCN2 at astrocytic processes and myelinated fiber tracts where it may regulate transcellular chloride flux involved in neuron excitability. The polypeptide is Hepatic and glial cell adhesion molecule (Homo sapiens (Human)).